Consider the following 192-residue polypeptide: UPF0312 protein Avin_03250 (192 aa).

Positions 1–23 (MLKKTLAALALGSALLGAGQAMA) are cleaved as a signal peptide.

Belongs to the UPF0312 family. Type 1 subfamily.

It is found in the periplasm. This chain is UPF0312 protein Avin_03250, found in Azotobacter vinelandii (strain DJ / ATCC BAA-1303).